The chain runs to 218 residues: Protein GrpE (218 aa).

Residues Met1–Gln10 are compositionally biased toward polar residues. Disordered stretches follow at residues Met1–Glu44 and Ser198–Ser218. Low complexity predominate over residues Gly200–Ser218.

The protein belongs to the GrpE family. In terms of assembly, homodimer.

The protein resides in the cytoplasm. Functionally, participates actively in the response to hyperosmotic and heat shock by preventing the aggregation of stress-denatured proteins, in association with DnaK and GrpE. It is the nucleotide exchange factor for DnaK and may function as a thermosensor. Unfolded proteins bind initially to DnaJ; upon interaction with the DnaJ-bound protein, DnaK hydrolyzes its bound ATP, resulting in the formation of a stable complex. GrpE releases ADP from DnaK; ATP binding to DnaK triggers the release of the substrate protein, thus completing the reaction cycle. Several rounds of ATP-dependent interactions between DnaJ, DnaK and GrpE are required for fully efficient folding. The chain is Protein GrpE from Parasynechococcus marenigrum (strain WH8102).